The chain runs to 613 residues: Dihydroxy-acid dehydratase (613 aa).

D81 is a Mg(2+) binding site. C122 is a binding site for [2Fe-2S] cluster. Mg(2+) is bound by residues D123 and K124. An N6-carboxylysine modification is found at K124. C195 is a [2Fe-2S] cluster binding site. Residue E491 participates in Mg(2+) binding. The Proton acceptor role is filled by S517.

It belongs to the IlvD/Edd family. In terms of assembly, homodimer. Requires [2Fe-2S] cluster as cofactor. It depends on Mg(2+) as a cofactor.

It carries out the reaction (2R)-2,3-dihydroxy-3-methylbutanoate = 3-methyl-2-oxobutanoate + H2O. The enzyme catalyses (2R,3R)-2,3-dihydroxy-3-methylpentanoate = (S)-3-methyl-2-oxopentanoate + H2O. The protein operates within amino-acid biosynthesis; L-isoleucine biosynthesis; L-isoleucine from 2-oxobutanoate: step 3/4. It participates in amino-acid biosynthesis; L-valine biosynthesis; L-valine from pyruvate: step 3/4. Its function is as follows. Functions in the biosynthesis of branched-chain amino acids. Catalyzes the dehydration of (2R,3R)-2,3-dihydroxy-3-methylpentanoate (2,3-dihydroxy-3-methylvalerate) into 2-oxo-3-methylpentanoate (2-oxo-3-methylvalerate) and of (2R)-2,3-dihydroxy-3-methylbutanoate (2,3-dihydroxyisovalerate) into 2-oxo-3-methylbutanoate (2-oxoisovalerate), the penultimate precursor to L-isoleucine and L-valine, respectively. The chain is Dihydroxy-acid dehydratase from Vibrio parahaemolyticus serotype O3:K6 (strain RIMD 2210633).